A 97-amino-acid chain; its full sequence is NADH dehydrogenase [ubiquinone] 1 alpha subcomplex subunit 2 (97 aa).

A disulfide bridge connects residues Cys19 and Cys53.

This sequence belongs to the complex I NDUFA2 subunit family. Complex I is composed of at least 49 different subunits.

Its subcellular location is the mitochondrion inner membrane. In terms of biological role, accessory subunit of the mitochondrial membrane respiratory chain NADH dehydrogenase (Complex I), that is believed not to be involved in catalysis. Complex I functions in the transfer of electrons from NADH to the respiratory chain. The immediate electron acceptor for the enzyme is believed to be ubiquinone. This chain is NADH dehydrogenase [ubiquinone] 1 alpha subcomplex subunit 2, found in Arabidopsis thaliana (Mouse-ear cress).